The sequence spans 259 residues: Global transcriptional regulator CodY (259 aa).

Positions 1–155 (MELLAKTRKL…SSTVVGMEIL (155 aa)) are GAF domain. The H-T-H motif DNA-binding region spans 203–222 (ASKIADRVGITRSVIVNALR). Ser215 is modified (phosphoserine).

Belongs to the CodY family.

Its subcellular location is the cytoplasm. In terms of biological role, DNA-binding global transcriptional regulator which is involved in the adaptive response to starvation and acts by directly or indirectly controlling the expression of numerous genes in response to nutrient availability. During rapid exponential growth, CodY is highly active and represses genes whose products allow adaptation to nutrient depletion. In Bacillus cereus (strain B4264), this protein is Global transcriptional regulator CodY.